Consider the following 399-residue polypeptide: MLFLGSGELGKEVTIELMRLGAWVCAADSYAGAPAQQVAHEYRVLDMANADQLRALFDEIQPDIIVPEVEAIATSELAAAAARGAQVVPSAEIAAICMDRERLRVLAHEELGLPTTPYRFAGSLEELREGAQIVGYPCVVKPIMSSSGHGQSVVRSADAIDAAWTEAQEGRRAHDEGDVSRVIVEALAPLDYELTVLTVSSSAGIVTCAPIGQRQESGDYRESWQPATFTPDVLEQAQHIARTAVEGLVAKAQASGEKGWGVFGVELFVLTDGNVLFNEVSPRPHDTGMVTMASQRLSEFALHARAILGLPITQEHVALSIPEGTVAASHAIVVQGDGEAEFRNVAAALAEPGTDLRVFAKPEVHGHRRMAVALAVGGDEADARAKAGNVAESLDIAIV.

N(1)-(5-phospho-beta-D-ribosyl)glycinamide contacts are provided by residues Glu-8–Leu-9 and Glu-68. Residues Arg-100, Lys-141, Ser-146 to Gln-151, Glu-185 to Ala-188, and Glu-193 each bind ATP. Positions Val-105 to Leu-308 constitute an ATP-grasp domain. Mg(2+) contacts are provided by Glu-266 and Glu-279. N(1)-(5-phospho-beta-D-ribosyl)glycinamide is bound by residues Asp-286, Lys-361, and Arg-368–Arg-369.

The protein belongs to the PurK/PurT family. As to quaternary structure, homodimer.

It catalyses the reaction N(1)-(5-phospho-beta-D-ribosyl)glycinamide + formate + ATP = N(2)-formyl-N(1)-(5-phospho-beta-D-ribosyl)glycinamide + ADP + phosphate + H(+). The protein operates within purine metabolism; IMP biosynthesis via de novo pathway; N(2)-formyl-N(1)-(5-phospho-D-ribosyl)glycinamide from N(1)-(5-phospho-D-ribosyl)glycinamide (formate route): step 1/1. In terms of biological role, involved in the de novo purine biosynthesis. Catalyzes the transfer of formate to 5-phospho-ribosyl-glycinamide (GAR), producing 5-phospho-ribosyl-N-formylglycinamide (FGAR). Formate is provided by PurU via hydrolysis of 10-formyl-tetrahydrofolate. This is Formate-dependent phosphoribosylglycinamide formyltransferase from Bifidobacterium adolescentis (strain ATCC 15703 / DSM 20083 / NCTC 11814 / E194a).